Reading from the N-terminus, the 321-residue chain is uncharacterized protein (321 aa).

Basic and acidic residues predominate over residues 1–12; the sequence is MQGGREVGRESV. A disordered region spans residues 1-85; sequence MQGGREVGRE…GWGEFEGFQE (85 aa). The segment covering 53–67 has biased composition (polar residues); it reads NANSSRLDEGLSSSR.

This is an uncharacterized protein from Rattus norvegicus (Rat).